A 218-amino-acid polypeptide reads, in one-letter code: Thiopurine S-methyltransferase (218 aa).

Residues tryptophan 11, leucine 46, glutamate 67, and arginine 122 each coordinate S-adenosyl-L-methionine.

The protein belongs to the class I-like SAM-binding methyltransferase superfamily. TPMT family.

The protein resides in the cytoplasm. The catalysed reaction is S-adenosyl-L-methionine + a thiopurine = S-adenosyl-L-homocysteine + a thiopurine S-methylether.. This chain is Thiopurine S-methyltransferase, found in Vibrio cholerae serotype O1 (strain ATCC 39541 / Classical Ogawa 395 / O395).